Here is a 78-residue protein sequence, read N- to C-terminus: Acyl carrier protein (78 aa).

A Carrier domain is found at 4 to 78 (AQIKEKVYDI…QQAIDYIVKK (75 aa)). O-(pantetheine 4'-phosphoryl)serine is present on serine 39.

The protein belongs to the acyl carrier protein (ACP) family. Post-translationally, 4'-phosphopantetheine is transferred from CoA to a specific serine of apo-ACP by AcpS. This modification is essential for activity because fatty acids are bound in thioester linkage to the sulfhydryl of the prosthetic group.

Its subcellular location is the cytoplasm. Its pathway is lipid metabolism; fatty acid biosynthesis. In terms of biological role, carrier of the growing fatty acid chain in fatty acid biosynthesis. The sequence is that of Acyl carrier protein from Chlorobium phaeobacteroides (strain DSM 266 / SMG 266 / 2430).